The following is a 154-amino-acid chain: tRNA (cytidine(34)-2'-O)-methyltransferase (154 aa).

Residues L78, G100, L122, and S130 each contribute to the S-adenosyl-L-methionine site.

The protein belongs to the class IV-like SAM-binding methyltransferase superfamily. RNA methyltransferase TrmH family. TrmL subfamily. In terms of assembly, homodimer.

The protein resides in the cytoplasm. It carries out the reaction cytidine(34) in tRNA + S-adenosyl-L-methionine = 2'-O-methylcytidine(34) in tRNA + S-adenosyl-L-homocysteine + H(+). The catalysed reaction is 5-carboxymethylaminomethyluridine(34) in tRNA(Leu) + S-adenosyl-L-methionine = 5-carboxymethylaminomethyl-2'-O-methyluridine(34) in tRNA(Leu) + S-adenosyl-L-homocysteine + H(+). In terms of biological role, methylates the ribose at the nucleotide 34 wobble position in the two leucyl isoacceptors tRNA(Leu)(CmAA) and tRNA(Leu)(cmnm5UmAA). Catalyzes the methyl transfer from S-adenosyl-L-methionine to the 2'-OH of the wobble nucleotide. This chain is tRNA (cytidine(34)-2'-O)-methyltransferase, found in Methylovorus glucosotrophus (strain SIP3-4).